The primary structure comprises 203 residues: Histidine biosynthesis bifunctional protein HisIE (203 aa).

Positions M1–F114 are phosphoribosyl-AMP cyclohydrolase. Residues L115 to Q203 are phosphoribosyl-ATP pyrophosphohydrolase.

In the N-terminal section; belongs to the PRA-CH family. This sequence in the C-terminal section; belongs to the PRA-PH family.

The protein localises to the cytoplasm. It catalyses the reaction 1-(5-phospho-beta-D-ribosyl)-ATP + H2O = 1-(5-phospho-beta-D-ribosyl)-5'-AMP + diphosphate + H(+). The enzyme catalyses 1-(5-phospho-beta-D-ribosyl)-5'-AMP + H2O = 1-(5-phospho-beta-D-ribosyl)-5-[(5-phospho-beta-D-ribosylamino)methylideneamino]imidazole-4-carboxamide. The protein operates within amino-acid biosynthesis; L-histidine biosynthesis; L-histidine from 5-phospho-alpha-D-ribose 1-diphosphate: step 2/9. Its pathway is amino-acid biosynthesis; L-histidine biosynthesis; L-histidine from 5-phospho-alpha-D-ribose 1-diphosphate: step 3/9. In Salmonella typhi, this protein is Histidine biosynthesis bifunctional protein HisIE (hisI).